The primary structure comprises 394 residues: L-lactate dehydrogenase (394 aa).

The FMN hydroxy acid dehydrogenase domain maps to 1–380 (MIISAASDYR…SRDSLVQNAE (380 aa)). Substrate is bound at residue Tyr-24. Positions 106 and 127 each coordinate FMN. A substrate-binding site is contributed by Tyr-129. Thr-155 contributes to the FMN binding site. Arg-164 contacts substrate. Lys-251 contributes to the FMN binding site. The active-site Proton acceptor is His-275. Residue Arg-278 participates in substrate binding. 306 to 330 (DSGIRNGLDVVRMIALGADSVLLGR) is an FMN binding site.

It belongs to the FMN-dependent alpha-hydroxy acid dehydrogenase family. FMN serves as cofactor.

The protein localises to the cell inner membrane. The catalysed reaction is (S)-lactate + A = pyruvate + AH2. Catalyzes the conversion of L-lactate to pyruvate. Is coupled to the respiratory chain. In Klebsiella pneumoniae subsp. pneumoniae (strain ATCC 700721 / MGH 78578), this protein is L-lactate dehydrogenase.